The following is a 371-amino-acid chain: S-adenosylmethionine:tRNA ribosyltransferase-isomerase (371 aa).

This sequence belongs to the QueA family. Monomer.

It localises to the cytoplasm. It carries out the reaction 7-aminomethyl-7-carbaguanosine(34) in tRNA + S-adenosyl-L-methionine = epoxyqueuosine(34) in tRNA + adenine + L-methionine + 2 H(+). The protein operates within tRNA modification; tRNA-queuosine biosynthesis. Functionally, transfers and isomerizes the ribose moiety from AdoMet to the 7-aminomethyl group of 7-deazaguanine (preQ1-tRNA) to give epoxyqueuosine (oQ-tRNA). The polypeptide is S-adenosylmethionine:tRNA ribosyltransferase-isomerase (Nitratidesulfovibrio vulgaris (strain DP4) (Desulfovibrio vulgaris)).